A 546-amino-acid polypeptide reads, in one-letter code: CTP synthase (546 aa).

The interval 1 to 264 is amidoligase domain; the sequence is MRYIVVTGGV…TKYIMKAMRL (264 aa). Residue serine 12 participates in CTP binding. Residue serine 12 participates in UTP binding. ATP-binding positions include 13-18 and aspartate 70; that span reads GLGKGI. The Mg(2+) site is built by aspartate 70 and glutamate 140. Residues 147–149, 185–190, and lysine 221 each bind CTP; these read DIE and KTKPTQ. UTP-binding positions include 185-190 and lysine 221; that span reads KTKPTQ. Residues 298 to 534 enclose the Glutamine amidotransferase type-1 domain; it reads GSQCTDPMKD…VEAMKAQRLR (237 aa). An L-glutamine-binding site is contributed by glycine 357. Cysteine 384 functions as the Nucleophile; for glutamine hydrolysis in the catalytic mechanism. Residues 385–388, glutamate 408, and arginine 464 contribute to the L-glutamine site; that span reads FGMQ. Active-site residues include histidine 507 and glutamate 509.

The protein belongs to the CTP synthase family. As to quaternary structure, homotetramer.

The enzyme catalyses UTP + L-glutamine + ATP + H2O = CTP + L-glutamate + ADP + phosphate + 2 H(+). The catalysed reaction is L-glutamine + H2O = L-glutamate + NH4(+). It carries out the reaction UTP + NH4(+) + ATP = CTP + ADP + phosphate + 2 H(+). It participates in pyrimidine metabolism; CTP biosynthesis via de novo pathway; CTP from UDP: step 2/2. With respect to regulation, allosterically activated by GTP, when glutamine is the substrate; GTP has no effect on the reaction when ammonia is the substrate. The allosteric effector GTP functions by stabilizing the protein conformation that binds the tetrahedral intermediate(s) formed during glutamine hydrolysis. Inhibited by the product CTP, via allosteric rather than competitive inhibition. Functionally, catalyzes the ATP-dependent amination of UTP to CTP with either L-glutamine or ammonia as the source of nitrogen. Regulates intracellular CTP levels through interactions with the four ribonucleotide triphosphates. In Methanothrix thermoacetophila (strain DSM 6194 / JCM 14653 / NBRC 101360 / PT) (Methanosaeta thermophila), this protein is CTP synthase.